We begin with the raw amino-acid sequence, 359 residues long: Peptide chain release factor 1 (359 aa).

Gln-233 is subject to N5-methylglutamine.

Belongs to the prokaryotic/mitochondrial release factor family. Post-translationally, methylated by PrmC. Methylation increases the termination efficiency of RF1.

It localises to the cytoplasm. In terms of biological role, peptide chain release factor 1 directs the termination of translation in response to the peptide chain termination codons UAG and UAA. The protein is Peptide chain release factor 1 of Orientia tsutsugamushi (strain Boryong) (Rickettsia tsutsugamushi).